We begin with the raw amino-acid sequence, 349 residues long: Phosphate acyltransferase (349 aa).

Belongs to the PlsX family. Homodimer. Probably interacts with PlsY.

The protein localises to the cytoplasm. It carries out the reaction a fatty acyl-[ACP] + phosphate = an acyl phosphate + holo-[ACP]. The protein operates within lipid metabolism; phospholipid metabolism. Catalyzes the reversible formation of acyl-phosphate (acyl-PO(4)) from acyl-[acyl-carrier-protein] (acyl-ACP). This enzyme utilizes acyl-ACP as fatty acyl donor, but not acyl-CoA. This Rhodospirillum rubrum (strain ATCC 11170 / ATH 1.1.1 / DSM 467 / LMG 4362 / NCIMB 8255 / S1) protein is Phosphate acyltransferase.